Here is a 185-residue protein sequence, read N- to C-terminus: MKTAQELRVGNVFMLGKDPMVVLKTEFTKSGRNSSVVKMKYKNLLTESPGEAVYKADDKFDIVVLDKKEVNYSYFASPMYVFMDAEFNQYEVEEETMSDALSFLEDGMPCEVVFYNDKPISVELPNTVVREIIYTEPAIKGDTTGKVLKPAKIPTGFELAVPLFCEIGDKIEIDTRTREYRSRVK.

Belongs to the elongation factor P family.

It localises to the cytoplasm. It participates in protein biosynthesis; polypeptide chain elongation. Its function is as follows. Involved in peptide bond synthesis. Stimulates efficient translation and peptide-bond synthesis on native or reconstituted 70S ribosomes in vitro. Probably functions indirectly by altering the affinity of the ribosome for aminoacyl-tRNA, thus increasing their reactivity as acceptors for peptidyl transferase. This Nitrosomonas europaea (strain ATCC 19718 / CIP 103999 / KCTC 2705 / NBRC 14298) protein is Elongation factor P.